Here is a 229-residue protein sequence, read N- to C-terminus: UPF0758 protein Mbur_0382 (229 aa).

The MPN domain occupies 106–228; the sequence is KIRSANDVYS…YVSLKEEGYI (123 aa). The Zn(2+) site is built by His-177, His-179, and Asp-190. The JAMM motif signature appears at 177–190; it reads HNHPSGDPAPSRED.

Belongs to the UPF0758 family.

In Methanococcoides burtonii (strain DSM 6242 / NBRC 107633 / OCM 468 / ACE-M), this protein is UPF0758 protein Mbur_0382.